Here is a 216-residue protein sequence, read N- to C-terminus: 3-isopropylmalate dehydratase small subunit (216 aa).

Belongs to the LeuD family. LeuD type 1 subfamily. In terms of assembly, heterodimer of LeuC and LeuD.

The catalysed reaction is (2R,3S)-3-isopropylmalate = (2S)-2-isopropylmalate. Its pathway is amino-acid biosynthesis; L-leucine biosynthesis; L-leucine from 3-methyl-2-oxobutanoate: step 2/4. In terms of biological role, catalyzes the isomerization between 2-isopropylmalate and 3-isopropylmalate, via the formation of 2-isopropylmaleate. The protein is 3-isopropylmalate dehydratase small subunit of Methylibium petroleiphilum (strain ATCC BAA-1232 / LMG 22953 / PM1).